We begin with the raw amino-acid sequence, 860 residues long: Leucine--tRNA ligase (860 aa).

A 'HIGH' region motif is present at residues 42–52 (PYPSGRLHMGH). The 'KMSKS' region signature appears at 619–623 (KMSKS). ATP is bound at residue lysine 622.

The protein belongs to the class-I aminoacyl-tRNA synthetase family.

It localises to the cytoplasm. The enzyme catalyses tRNA(Leu) + L-leucine + ATP = L-leucyl-tRNA(Leu) + AMP + diphosphate. The protein is Leucine--tRNA ligase of Proteus mirabilis (strain HI4320).